Consider the following 297-residue polypeptide: Ribosomal protein L11 methyltransferase (297 aa).

S-adenosyl-L-methionine is bound by residues T152, G173, D195, and N234.

Belongs to the methyltransferase superfamily. PrmA family.

The protein resides in the cytoplasm. The enzyme catalyses L-lysyl-[protein] + 3 S-adenosyl-L-methionine = N(6),N(6),N(6)-trimethyl-L-lysyl-[protein] + 3 S-adenosyl-L-homocysteine + 3 H(+). Its function is as follows. Methylates ribosomal protein L11. This Cupriavidus pinatubonensis (strain JMP 134 / LMG 1197) (Cupriavidus necator (strain JMP 134)) protein is Ribosomal protein L11 methyltransferase.